Reading from the N-terminus, the 437-residue chain is 3-phosphoshikimate 1-carboxyvinyltransferase (437 aa).

Positions 22, 23, and 27 each coordinate 3-phosphoshikimate. Lys-22 contacts phosphoenolpyruvate. The phosphoenolpyruvate site is built by Gly-94 and Arg-122. Residues Ser-167, Gln-169, Asp-314, and Lys-341 each contribute to the 3-phosphoshikimate site. Phosphoenolpyruvate is bound at residue Gln-169. Asp-314 (proton acceptor) is an active-site residue. Residues Arg-345 and Arg-389 each contribute to the phosphoenolpyruvate site.

This sequence belongs to the EPSP synthase family. Monomer.

It localises to the cytoplasm. It carries out the reaction 3-phosphoshikimate + phosphoenolpyruvate = 5-O-(1-carboxyvinyl)-3-phosphoshikimate + phosphate. Its pathway is metabolic intermediate biosynthesis; chorismate biosynthesis; chorismate from D-erythrose 4-phosphate and phosphoenolpyruvate: step 6/7. Functionally, catalyzes the transfer of the enolpyruvyl moiety of phosphoenolpyruvate (PEP) to the 5-hydroxyl of shikimate-3-phosphate (S3P) to produce enolpyruvyl shikimate-3-phosphate and inorganic phosphate. In Oenococcus oeni (strain ATCC BAA-331 / PSU-1), this protein is 3-phosphoshikimate 1-carboxyvinyltransferase.